Here is a 503-residue protein sequence, read N- to C-terminus: Putative FBD-associated F-box protein At5g56410 (503 aa).

Positions Asp2 to Asp50 constitute an F-box domain. The region spanning Phe361–Ile412 is the FBD domain.

This Arabidopsis thaliana (Mouse-ear cress) protein is Putative FBD-associated F-box protein At5g56410.